A 62-amino-acid polypeptide reads, in one-letter code: Large ribosomal subunit protein bL28 (62 aa).

Residues 1-22 form a disordered region; the sequence is MAKKCAISGKGPMSGNNVSHAK.

This sequence belongs to the bacterial ribosomal protein bL28 family.

The protein is Large ribosomal subunit protein bL28 of Sulfurimonas denitrificans (strain ATCC 33889 / DSM 1251) (Thiomicrospira denitrificans (strain ATCC 33889 / DSM 1251)).